We begin with the raw amino-acid sequence, 382 residues long: Probable trehalose-phosphate phosphatase 2 (382 aa).

This sequence belongs to the trehalose phosphatase family. The cofactor is a divalent metal cation. As to expression, expressed in roots and shoots.

It catalyses the reaction alpha,alpha-trehalose 6-phosphate + H2O = alpha,alpha-trehalose + phosphate. The protein operates within glycan biosynthesis; trehalose biosynthesis. In terms of biological role, removes the phosphate from trehalose 6-phosphate to produce free trehalose. Trehalose accumulation in plant may improve abiotic stress tolerance. The protein is Probable trehalose-phosphate phosphatase 2 (TPP2) of Oryza sativa subsp. japonica (Rice).